An 819-amino-acid polypeptide reads, in one-letter code: Leucine--tRNA ligase (819 aa).

The 'HIGH' region motif lies at 40 to 51 (PYPSGAGLHVGH). Positions 600–604 (KMSKS) match the 'KMSKS' region motif. ATP is bound at residue lysine 603.

Belongs to the class-I aminoacyl-tRNA synthetase family.

Its subcellular location is the cytoplasm. It catalyses the reaction tRNA(Leu) + L-leucine + ATP = L-leucyl-tRNA(Leu) + AMP + diphosphate. This Chlamydia muridarum (strain MoPn / Nigg) protein is Leucine--tRNA ligase.